The primary structure comprises 145 residues: 3-hydroxyacyl-[acyl-carrier-protein] dehydratase FabZ (145 aa).

Residue H51 is part of the active site.

It belongs to the thioester dehydratase family. FabZ subfamily.

The protein localises to the cytoplasm. The catalysed reaction is a (3R)-hydroxyacyl-[ACP] = a (2E)-enoyl-[ACP] + H2O. Functionally, involved in unsaturated fatty acids biosynthesis. Catalyzes the dehydration of short chain beta-hydroxyacyl-ACPs and long chain saturated and unsaturated beta-hydroxyacyl-ACPs. The polypeptide is 3-hydroxyacyl-[acyl-carrier-protein] dehydratase FabZ (Staphylococcus haemolyticus (strain JCSC1435)).